Reading from the N-terminus, the 397-residue chain is F-box protein At5g25290 (397 aa).

The 46-residue stretch at 11–56 folds into the F-box domain; it reads VTLWSEIPMDILRSVFERLSFVDLHRAKIVCSHWYSCSKQSFLRKT.

The polypeptide is F-box protein At5g25290 (Arabidopsis thaliana (Mouse-ear cress)).